A 222-amino-acid polypeptide reads, in one-letter code: Coiled-coil domain-containing protein 43 homolog (222 aa).

Residues 80 to 111 adopt a coiled-coil conformation; the sequence is ETENKLKLTNLKLEQELKIKETTQSEINEEEK. Disordered stretches follow at residues 102–126 and 159–222; these read TQSEINEEEKYENPYHKMSREEQKK and EDNK…KRRL. 2 stretches are compositionally biased toward basic and acidic residues: residues 112–126 and 175–212; these read YENPYHKMSREEQKK and RIADEEKAKREKSKIEHQKKVQRDKEALEKQKRDEEKK. Positions 168–222 form a coiled coil; it reads GENLNAKRIADEEKAKREKSKIEHQKKVQRDKEALEKQKRDEEKKKTVKKEKRRL. Positions 213–222 are enriched in basic residues; sequence KTVKKEKRRL.

This sequence belongs to the CCDC43 family.

The sequence is that of Coiled-coil domain-containing protein 43 homolog from Dictyostelium discoideum (Social amoeba).